The chain runs to 238 residues: tRNA (guanine-N(1)-)-methyltransferase (238 aa).

S-adenosyl-L-methionine-binding positions include Gly112 and 131-136 (LGDFIL).

It belongs to the RNA methyltransferase TrmD family. In terms of assembly, homodimer.

Its subcellular location is the cytoplasm. The enzyme catalyses guanosine(37) in tRNA + S-adenosyl-L-methionine = N(1)-methylguanosine(37) in tRNA + S-adenosyl-L-homocysteine + H(+). Its function is as follows. Specifically methylates guanosine-37 in various tRNAs. This chain is tRNA (guanine-N(1)-)-methyltransferase, found in Nostoc punctiforme (strain ATCC 29133 / PCC 73102).